The following is a 146-amino-acid chain: Protein SprT-like (146 aa).

The region spanning 6–141 is the SprT-like domain; it reads YVKTVSIEDF…GCGLCQGKLI (136 aa). Histidine 64 provides a ligand contact to Zn(2+). Residue glutamate 65 is part of the active site. Residue histidine 68 coordinates Zn(2+).

It belongs to the SprT family. Zn(2+) serves as cofactor.

The protein localises to the cytoplasm. This is Protein SprT-like from Streptococcus thermophilus (strain CNRZ 1066).